A 235-amino-acid chain; its full sequence is Phosphoribosylaminoimidazole-succinocarboxamide synthase (235 aa).

It belongs to the SAICAR synthetase family.

It carries out the reaction 5-amino-1-(5-phospho-D-ribosyl)imidazole-4-carboxylate + L-aspartate + ATP = (2S)-2-[5-amino-1-(5-phospho-beta-D-ribosyl)imidazole-4-carboxamido]succinate + ADP + phosphate + 2 H(+). It participates in purine metabolism; IMP biosynthesis via de novo pathway; 5-amino-1-(5-phospho-D-ribosyl)imidazole-4-carboxamide from 5-amino-1-(5-phospho-D-ribosyl)imidazole-4-carboxylate: step 1/2. This chain is Phosphoribosylaminoimidazole-succinocarboxamide synthase, found in Clostridium acetobutylicum (strain ATCC 824 / DSM 792 / JCM 1419 / IAM 19013 / LMG 5710 / NBRC 13948 / NRRL B-527 / VKM B-1787 / 2291 / W).